The sequence spans 391 residues: UPF0229 protein BCG9842_B4751 (391 aa).

The span at 1–16 (MGEENQPNYTISQENW) shows a compositional bias: polar residues. Disordered stretches follow at residues 1 to 31 (MGEE…RHQE) and 80 to 117 (HVGQ…GDAA). The segment covering 21 to 31 (KGYDDQQRHQE) has biased composition (basic and acidic residues). Gly residues predominate over residues 98-115 (GSGGQKQKGPGKGQGAGD).

Belongs to the UPF0229 family.

The sequence is that of UPF0229 protein BCG9842_B4751 from Bacillus cereus (strain G9842).